The primary structure comprises 279 residues: Four and a half LIM domains protein 2 (279 aa).

A C4-type zinc finger spans residues 7–31; it reads CHHCNESLYGKKYILKEENPHCVAC. 3 consecutive LIM zinc-binding domains span residues 40 to 92, 101 to 153, and 162 to 212; these read CEEC…CTDC, CQEC…CVPC, and CVQC…CLTC. K78 participates in a covalent cross-link: Glycyl lysine isopeptide (Lys-Gly) (interchain with G-Cter in SUMO2). Glycyl lysine isopeptide (Lys-Gly) (interchain with G-Cter in SUMO2) cross-links involve residues K167 and K220. Residues 221–275 form the LIM zinc-binding 4 domain; that stretch reads CAGCTNPISGLGGTKYISFEERQWHNDCFNCKKCSLSLVGRGFLTERDDILCPDC. S238 carries the phosphoserine modification.

Interacts with ZNF638 and TTN/titin. Interacts with E4F1. Interacts with GRB7. Interacts with SIRT1 and FOXO1. Interacts with CEFIP. Interacts with calcineurin. Interacts with FOXK1. In terms of tissue distribution, highly expressed in heart but also detectable in brain and skeletal muscle.

Its subcellular location is the cytoplasm. The protein resides in the nucleus. It localises to the myofibril. The protein localises to the sarcomere. It is found in the z line. In terms of biological role, may function as a molecular transmitter linking various signaling pathways to transcriptional regulation. Negatively regulates the transcriptional repressor E4F1 and may function in cell growth. Inhibits the transcriptional activity of FOXO1 and its apoptotic function by enhancing the interaction of FOXO1 with SIRT1 and FOXO1 deacetylation. Negatively regulates the calcineurin/NFAT signaling pathway in cardiomyocytes. This Mus musculus (Mouse) protein is Four and a half LIM domains protein 2 (Fhl2).